Here is a 142-residue protein sequence, read N- to C-terminus: SPbeta prophage-derived deoxyuridine 5'-triphosphate nucleotidohydrolase YosS (142 aa).

DUMP-binding residues include Ser62 and Asn74. Asp80 functions as the Proton acceptor in the catalytic mechanism. DUMP-binding residues include Tyr83 and Phe91.

This sequence belongs to the dUTPase family. Homotrimer. Requires Mg(2+) as cofactor.

The enzyme catalyses dUTP + H2O = dUMP + diphosphate + H(+). It participates in pyrimidine metabolism; dUMP biosynthesis; dUMP from dCTP (dUTP route): step 2/2. In terms of biological role, involved in nucleotide metabolism: produces dUMP, the immediate precursor of thymidine nucleotides and decreases the intracellular concentration of dUTP, so that uracil cannot be incorporated into DNA. The Ser-62 side chain changes its position upon ligand-binding to make contacts with the nucleotide phosphates. In Bacillus subtilis (strain 168), this protein is SPbeta prophage-derived deoxyuridine 5'-triphosphate nucleotidohydrolase YosS.